Here is a 135-residue protein sequence, read N- to C-terminus: ATP synthase epsilon chain (135 aa).

This sequence belongs to the ATPase epsilon chain family. F-type ATPases have 2 components, CF(1) - the catalytic core - and CF(0) - the membrane proton channel. CF(1) has five subunits: alpha(3), beta(3), gamma(1), delta(1), epsilon(1). CF(0) has three main subunits: a, b and c.

The protein resides in the cell inner membrane. Functionally, produces ATP from ADP in the presence of a proton gradient across the membrane. This Rhodopseudomonas palustris (strain HaA2) protein is ATP synthase epsilon chain.